A 325-amino-acid chain; its full sequence is Elongation factor P--(R)-beta-lysine ligase (325 aa).

Serine 76–glutamate 78 contributes to the substrate binding site. Residues arginine 100–glutamate 102 and asparagine 109 each bind ATP. Tyrosine 118 provides a ligand contact to substrate. Residue glutamate 244 to leucine 245 coordinates ATP. Glutamate 251 provides a ligand contact to substrate. Glycine 300 serves as a coordination point for ATP.

This sequence belongs to the class-II aminoacyl-tRNA synthetase family. EpmA subfamily. In terms of assembly, homodimer.

The catalysed reaction is D-beta-lysine + L-lysyl-[protein] + ATP = N(6)-((3R)-3,6-diaminohexanoyl)-L-lysyl-[protein] + AMP + diphosphate + H(+). In terms of biological role, with EpmB is involved in the beta-lysylation step of the post-translational modification of translation elongation factor P (EF-P) on 'Lys-34'. Catalyzes the ATP-dependent activation of (R)-beta-lysine produced by EpmB, forming a lysyl-adenylate, from which the beta-lysyl moiety is then transferred to the epsilon-amino group of EF-P 'Lys-34'. The polypeptide is Elongation factor P--(R)-beta-lysine ligase (Escherichia fergusonii (strain ATCC 35469 / DSM 13698 / CCUG 18766 / IAM 14443 / JCM 21226 / LMG 7866 / NBRC 102419 / NCTC 12128 / CDC 0568-73)).